The following is a 543-amino-acid chain: Nucleoside-triphosphatase ntp-1 (543 aa).

Residues 40–60 (VYGFLLTCTCLLLILTIIPMS) form a helical membrane-spanning segment. Glutamate 212 functions as the Proton acceptor in the catalytic mechanism. The helical transmembrane segment at 497–517 (QISNFFSFFVILIIVLAVALY) threads the bilayer.

Belongs to the GDA1/CD39 NTPase family.

Its subcellular location is the golgi apparatus membrane. The catalysed reaction is a ribonucleoside 5'-triphosphate + H2O = a ribonucleoside 5'-diphosphate + phosphate + H(+). Functionally, seems to be able to hydrolyze CTP, ATP and UTP. This is Nucleoside-triphosphatase ntp-1 from Caenorhabditis elegans.